The chain runs to 551 residues: uncharacterized protein (551 aa).

The transit peptide at 1–36 (MMALVRDRRAHYVMSIVIRWVHCFSSSLRGTFGTRW) directs the protein to the mitochondrion. A coiled-coil region spans residues 203–315 (TNILLRKLKE…MDSRDRLREE (113 aa)). The tract at residues 354–389 (REASLSPWPKSPPSTTALRPHSATMSVSSAGAQKAK) is disordered. Residues 366 to 384 (PSTTALRPHSATMSVSSAG) are compositionally biased toward polar residues. Positions 405–439 (KHGLESQIEALKANLENEKKKVERFRKEADRLNKS) form a coiled coil. The disordered stretch occupies residues 519–551 (LQLSPKGKLSESPKEESLEEPSMRQSSPAETVD). Over residues 541-551 (MRQSSPAETVD) the composition is skewed to polar residues.

Interacts with NOD2.

The protein localises to the mitochondrion. This is an uncharacterized protein from Homo sapiens (Human).